The chain runs to 443 residues: Xaa-Pro dipeptidase (443 aa).

Residues aspartate 246, aspartate 257, histidine 339, glutamate 384, and glutamate 423 each contribute to the Mn(2+) site.

It belongs to the peptidase M24B family. Bacterial-type prolidase subfamily. Mn(2+) serves as cofactor.

It carries out the reaction Xaa-L-Pro dipeptide + H2O = an L-alpha-amino acid + L-proline. Functionally, splits dipeptides with a prolyl residue in the C-terminal position. In Escherichia coli O81 (strain ED1a), this protein is Xaa-Pro dipeptidase.